The sequence spans 212 residues: Thiamine-phosphate synthase (212 aa).

4-amino-2-methyl-5-(diphosphooxymethyl)pyrimidine is bound by residues 39–43 and asparagine 71; that span reads QLRIK. Aspartate 72 and aspartate 91 together coordinate Mg(2+). Serine 110 is a binding site for 4-amino-2-methyl-5-(diphosphooxymethyl)pyrimidine. Residue 136–138 participates in 2-[(2R,5Z)-2-carboxy-4-methylthiazol-5(2H)-ylidene]ethyl phosphate binding; the sequence is TQT. Lysine 139 contributes to the 4-amino-2-methyl-5-(diphosphooxymethyl)pyrimidine binding site. 2-[(2R,5Z)-2-carboxy-4-methylthiazol-5(2H)-ylidene]ethyl phosphate is bound by residues glycine 168 and 188-189; that span reads VS.

The protein belongs to the thiamine-phosphate synthase family. Mg(2+) is required as a cofactor.

It carries out the reaction 2-[(2R,5Z)-2-carboxy-4-methylthiazol-5(2H)-ylidene]ethyl phosphate + 4-amino-2-methyl-5-(diphosphooxymethyl)pyrimidine + 2 H(+) = thiamine phosphate + CO2 + diphosphate. The enzyme catalyses 2-(2-carboxy-4-methylthiazol-5-yl)ethyl phosphate + 4-amino-2-methyl-5-(diphosphooxymethyl)pyrimidine + 2 H(+) = thiamine phosphate + CO2 + diphosphate. It catalyses the reaction 4-methyl-5-(2-phosphooxyethyl)-thiazole + 4-amino-2-methyl-5-(diphosphooxymethyl)pyrimidine + H(+) = thiamine phosphate + diphosphate. It functions in the pathway cofactor biosynthesis; thiamine diphosphate biosynthesis; thiamine phosphate from 4-amino-2-methyl-5-diphosphomethylpyrimidine and 4-methyl-5-(2-phosphoethyl)-thiazole: step 1/1. Functionally, condenses 4-methyl-5-(beta-hydroxyethyl)thiazole monophosphate (THZ-P) and 2-methyl-4-amino-5-hydroxymethyl pyrimidine pyrophosphate (HMP-PP) to form thiamine monophosphate (TMP). This chain is Thiamine-phosphate synthase, found in Serratia proteamaculans (strain 568).